Here is a 332-residue protein sequence, read N- to C-terminus: DNA-directed RNA polymerase subunit alpha (332 aa).

The segment at 1-234 is alpha N-terminal domain (alpha-NTD); sequence MIEYVIPKKL…NHLQIITDSL (234 aa). Residues 264 to 332 form an alpha C-terminal domain (alpha-CTD) region; that stretch reads AVYSKKIDEL…KFGLSLKKGG (69 aa).

The protein belongs to the RNA polymerase alpha chain family. In terms of assembly, homodimer. The RNAP catalytic core consists of 2 alpha, 1 beta, 1 beta' and 1 omega subunit. When a sigma factor is associated with the core the holoenzyme is formed, which can initiate transcription.

It carries out the reaction RNA(n) + a ribonucleoside 5'-triphosphate = RNA(n+1) + diphosphate. In terms of biological role, DNA-dependent RNA polymerase catalyzes the transcription of DNA into RNA using the four ribonucleoside triphosphates as substrates. This is DNA-directed RNA polymerase subunit alpha from Pseudothermotoga lettingae (strain ATCC BAA-301 / DSM 14385 / NBRC 107922 / TMO) (Thermotoga lettingae).